The chain runs to 338 residues: Ketol-acid reductoisomerase (NADP(+)) (338 aa).

Residues 1–181 (MKVFYDKDCD…GGGKAGIIET (181 aa)) form the KARI N-terminal Rossmann domain. Residues 24–27 (YGSQ), R47, and S52 contribute to the NADP(+) site. H107 is an active-site residue. G133 provides a ligand contact to NADP(+). Residues 182-327 (NFREETETDL…GKLRAMMPWI (146 aa)) form the KARI C-terminal knotted domain. Residues D190, E194, E226, and E230 each contribute to the Mg(2+) site. S251 lines the substrate pocket.

The protein belongs to the ketol-acid reductoisomerase family. The cofactor is Mg(2+).

The catalysed reaction is (2R)-2,3-dihydroxy-3-methylbutanoate + NADP(+) = (2S)-2-acetolactate + NADPH + H(+). It catalyses the reaction (2R,3R)-2,3-dihydroxy-3-methylpentanoate + NADP(+) = (S)-2-ethyl-2-hydroxy-3-oxobutanoate + NADPH + H(+). The protein operates within amino-acid biosynthesis; L-isoleucine biosynthesis; L-isoleucine from 2-oxobutanoate: step 2/4. It participates in amino-acid biosynthesis; L-valine biosynthesis; L-valine from pyruvate: step 2/4. Functionally, involved in the biosynthesis of branched-chain amino acids (BCAA). Catalyzes an alkyl-migration followed by a ketol-acid reduction of (S)-2-acetolactate (S2AL) to yield (R)-2,3-dihydroxy-isovalerate. In the isomerase reaction, S2AL is rearranged via a Mg-dependent methyl migration to produce 3-hydroxy-3-methyl-2-ketobutyrate (HMKB). In the reductase reaction, this 2-ketoacid undergoes a metal-dependent reduction by NADPH to yield (R)-2,3-dihydroxy-isovalerate. This Polaromonas naphthalenivorans (strain CJ2) protein is Ketol-acid reductoisomerase (NADP(+)).